The following is a 245-amino-acid chain: Nucleoprotein (245 aa).

Tyr-30, Lys-67, Arg-106, Arg-186, and Ser-196 together coordinate RNA.

This sequence belongs to the phlebovirus nucleocapsid protein family. Homodimer. Homohexamer; ring-shaped, necessary to form the nucleocapsid. Homopentamers; opened pentamers in solution. Binds to viral genomic RNA. Interacts with glycoprotein Gn; this interaction allows packaging of nucleocapsids into virions.

The protein localises to the virion. It is found in the host cytoplasm. It localises to the host nucleus. The protein resides in the host endoplasmic reticulum-Golgi intermediate compartment. Its subcellular location is the host Golgi apparatus. Encapsidates the genomic RNA, protecting it from nucleases. Displays high affinity for single-stranded nucleic acid. The encapsidated genomic RNA is termed the nucleocapsid (NC) or ribonucleoprotein. The ribonucleoprotein has a non-helical structure. Serves as template for viral transcription and replication. After replication, the nucleocapsid is recruited to the host Golgi apparatus by glycoprotein Gn for packaging into virus particles. This Dabie bandavirus (Severe fever with thrombocytopenia virus) protein is Nucleoprotein (NP).